Reading from the N-terminus, the 213-residue chain is Uracil phosphoribosyltransferase (213 aa).

5-phospho-alpha-D-ribose 1-diphosphate-binding positions include Arg78, Arg103, and 131–139; that span reads DPMLATGGT. Residues Ile197 and 202-204 contribute to the uracil site; that span reads GDA. Asp203 lines the 5-phospho-alpha-D-ribose 1-diphosphate pocket.

It belongs to the UPRTase family. Requires Mg(2+) as cofactor.

It catalyses the reaction UMP + diphosphate = 5-phospho-alpha-D-ribose 1-diphosphate + uracil. It functions in the pathway pyrimidine metabolism; UMP biosynthesis via salvage pathway; UMP from uracil: step 1/1. Allosterically activated by GTP. Its function is as follows. Catalyzes the conversion of uracil and 5-phospho-alpha-D-ribose 1-diphosphate (PRPP) to UMP and diphosphate. The chain is Uracil phosphoribosyltransferase from Bifidobacterium longum (strain DJO10A).